The sequence spans 105 residues: Large ribosomal subunit protein uL24 (105 aa).

The protein belongs to the universal ribosomal protein uL24 family. In terms of assembly, part of the 50S ribosomal subunit.

Functionally, one of two assembly initiator proteins, it binds directly to the 5'-end of the 23S rRNA, where it nucleates assembly of the 50S subunit. One of the proteins that surrounds the polypeptide exit tunnel on the outside of the subunit. This chain is Large ribosomal subunit protein uL24, found in Francisella tularensis subsp. novicida (strain U112).